Here is a 1384-residue protein sequence, read N- to C-terminus: CHD3-type chromatin-remodeling factor PICKLE (1384 aa).

Ser23 carries the post-translational modification Phosphoserine. Residues 49-96 (ENACQACGESTNLVSCNTCTYAFHAKCLVPPLKDASVENWRCPECVSP) form a PHD-type zinc finger. 2 consecutive Chromo domains span residues 98–180 (NEID…NSED) and 190–249 (TTVD…RSKD). One can recognise a Helicase ATP-binding domain in the interval 285–471 (RFSWSKQTHV…FMLMHFLDAG (187 aa)). Position 298–305 (298–305 (DEMGLGKT)) interacts with ATP. The Nuclear localization signal signature appears at 376 to 383 (KKKKSGQI). Positions 422 to 425 (DEGH) match the DEAH box motif. A Helicase C-terminal domain is found at 599 to 760 (LLDKMMVKLK…NINQEELDDI (162 aa)). A compositionally biased stretch (acidic residues) spans 893–912 (AGLEDVSSDGDESYEAESTD). Disordered stretches follow at residues 893–941 (AGLE…TPLM), 1122–1152 (GLQG…NNNA), 1313–1344 (SDQS…PLRG), and 1365–1384 (VDVK…MVVD). Residues 1138-1152 (TNQNPGSVITGNNNA) show a composition bias toward polar residues. Composition is skewed to basic and acidic residues over residues 1316 to 1341 (SKSH…ETKP) and 1367 to 1384 (VKME…MVVD).

Belongs to the SNF2/RAD54 helicase family. As to quaternary structure, interacts with TAF12B. As to expression, mostly expressed in tissue undergoing significant differentiation (meristems and primordia) such as young seedlings, influorescent tissue and young siliques, but not in endosperm and seed coat (at protein level). Levels decrease as organs age. Also present in trichomes.

It is found in the nucleus. Chromatin remodeling factor that represses the expression of embryonic trait genes (such as NFYB9/LEC1) upon and after seed germination and thus enables the developmental switch to post-germinative growth. Silences some MADS-box proteins such as PHE1 and PHE2. Plays a role during carpel differentiation. Regulates late processes in cytokinin signaling. The sequence is that of CHD3-type chromatin-remodeling factor PICKLE (PKL) from Arabidopsis thaliana (Mouse-ear cress).